A 590-amino-acid polypeptide reads, in one-letter code: Vesicular glutamate transporter 3 (590 aa).

Residues 1–76 (MPLGGFAGLK…CGCFGLPKRY (76 aa)) lie on the Cytoplasmic side of the membrane. Residues 77–97 (IIAMLSGLGFCISFGIRCNLG) form a helical membrane-spanning segment. The Vesicular portion of the chain corresponds to 98–130 (VAIVEMVNNNTVYINGTAVMQPAQFNWDPETVG). N-linked (GlcNAc...) asparagine glycans are attached at residues N106 and N112. A helical membrane pass occupies residues 131–151 (LIHGSFFWGYIVTQIPGGFIS). Residues 152–153 (NK) lie on the Cytoplasmic side of the membrane. A helical transmembrane segment spans residues 154–174 (LAANRVFGAAIFLTSVLNMFI). The Vesicular portion of the chain corresponds to 175–182 (PSAARVHY). A helical membrane pass occupies residues 183–203 (GCVMFVRILQGLVEGVTYPAC). Topologically, residues 204 to 221 (HGMWSKWAPPLERSRLAT) are cytoplasmic. Residues 222–242 (TSFCGSYAGAVIAMPLAGILV) form a helical membrane-spanning segment. At 243–249 (QYVGWPS) the chain is on the vesicular side. Residues 250–270 (VFYIYGVFGIIWYIFWILLAY) form a helical membrane-spanning segment. Over 271–315 (NSPAVHPTISEEERNYIETSIGEGANLMSSTEKFKTPWREFFTSM) the chain is Cytoplasmic. Residues 316–336 (PVYAIIVANFCRSWTFYLLLI) form a helical membrane-spanning segment. Topologically, residues 337–354 (SQPAYFEEVFGFPISKVG) are vesicular. Residues 355–375 (ILSAVPHMVMTIIVPIGGQLA) form a helical membrane-spanning segment. Residues 376–391 (DFLRSRKILSTTTVRK) lie on the Cytoplasmic side of the membrane. Residues 392–412 (IMNCGGFGMEATLLLVVGFSH) form a helical membrane-spanning segment. At 413-414 (TR) the chain is on the vesicular side. The helical transmembrane segment at 415-435 (AVAISFLILAVGFSGFAISGF) threads the bilayer. Residues 436-448 (NVNHLDIAPRYAS) are Cytoplasmic-facing. The helical transmembrane segment at 449–469 (ILMGISNGVGTLSGMVCPLIV) threads the bilayer. Over 470–482 (GALTKHKTRLEWQ) the chain is Vesicular. The chain crosses the membrane as a helical span at residues 483–503 (HVFVIASMVHYTGVIFYAIFA). The Cytoplasmic segment spans residues 504 to 587 (SGEKQDWADP…NHYENGEYQT (84 aa)). A compositionally biased stretch (acidic residues) spans 526–535 (EDELADETEP). The disordered stretch occupies residues 526–590 (EDELADETEP…ENGEYQTQYQ (65 aa)). Polar residues predominate over residues 536 to 557 (SSDSGLATRQKTYGTTDNSSGR).

This sequence belongs to the major facilitator superfamily. Sodium/anion cotransporter family. VGLUT subfamily.

It is found in the cytoplasmic vesicle. The protein localises to the secretory vesicle. The protein resides in the synaptic vesicle membrane. It localises to the cell membrane. Its subcellular location is the synapse. It is found in the synaptosome. It catalyses the reaction L-glutamate(out) = L-glutamate(in). The enzyme catalyses 3 Na(+)(out) + phosphate(out) = 3 Na(+)(in) + phosphate(in). It carries out the reaction chloride(in) = chloride(out). With respect to regulation, the L-glutamate uniporter activity exhibits a biphasic dependence on chloride concentration. Chloride channel activity is allosterically activated by lumenal H(+) and Cl(-) leading to synaptic vesicles acidification. The glutamate transport activity is allosterically activated by lumenal H(+) and Cl(-), preventing non-vesicular L-glutamate release. Its function is as follows. Multifunctional transporter that transports L-glutamate as well as multiple ions such as chloride, sodium and phosphate. At the synaptic vesicle membrane, mainly functions as an uniporter that mediates the uptake of L-glutamate into synaptic vesicles at presynaptic nerve terminals of excitatory neural cells. The L-glutamate uniporter activity is electrogenic and is driven by the proton electrochemical gradient, mainly by the electrical gradient established by the vacuolar H(+)-ATPase across the synaptic vesicle membrane. In addition, functions as a chloride channel that allows a chloride permeation through the synaptic vesicle membrane that affects the proton electrochemical gradient and promotes synaptic vesicles acidification. At the plasma membrane, following exocytosis, functions as a symporter of Na(+) and phosphate from the extracellular space to the cytoplasm allowing synaptic phosphate homeostasis regulation. The symporter activity is electrogenic. Moreover, operates synergistically with SLC18A3/VACHT under a constant H(+) gradient, thereby allowing striatal vesicular acetylcholine uptake. This is Vesicular glutamate transporter 3 from Danio rerio (Zebrafish).